Consider the following 132-residue polypeptide: Small ribosomal subunit protein uS8 (132 aa).

Belongs to the universal ribosomal protein uS8 family. Part of the 30S ribosomal subunit. Contacts proteins S5 and S12.

Functionally, one of the primary rRNA binding proteins, it binds directly to 16S rRNA central domain where it helps coordinate assembly of the platform of the 30S subunit. In Kineococcus radiotolerans (strain ATCC BAA-149 / DSM 14245 / SRS30216), this protein is Small ribosomal subunit protein uS8.